We begin with the raw amino-acid sequence, 325 residues long: Lipid droplet-associated hydrolase (325 aa).

The Nucleophile role is filled by Ser139. Catalysis depends on charge relay system residues Asp271 and His300.

The protein belongs to the AB hydrolase superfamily. LDAH family. In terms of tissue distribution, present in macrophage-rich areas in atherosclerotic lesions (at protein level). Expressed in monocytes and monocyte-derived macrophages (at protein level).

Its subcellular location is the lipid droplet. The protein resides in the endoplasmic reticulum. The catalysed reaction is a cholesterol ester + H2O = cholesterol + a fatty acid + H(+). Its function is as follows. Probable serine lipid hydrolase associated with lipid droplets. Has low cholesterol esterase activity. Appears to lack triglyceride lipase activity. Involved in cholesterol and triglyceride homeostasis; has opposing effects, stimulating cellular triglyceride accumulation and cellular cholesterol release. Acts antagonistically with PNPLA2/ATGL in regulation of cellular lipid stores. May regulate triglyceride accumulation indirectly through stimulation of PNPLA2/ATGL ubiquitination and proteasomal degradation. Promotes microtubule-dependent lipid droplet fusion. Highly expressed in macrophage-rich areas in atherosclerotic lesions, suggesting that it could promote cholesterol ester turnover in macrophages. This chain is Lipid droplet-associated hydrolase, found in Homo sapiens (Human).